The primary structure comprises 454 residues: Nuclear envelope integral membrane protein (454 aa).

Residues 1-18 form the signal peptide; it reads MHSAGLLMLTVAGYFTSG. N-linked (GlcNAc...) asparagine glycosylation is present at Asn38. Transmembrane regions (helical) follow at residues 138–158, 166–186, 197–217, 231–251, and 280–300; these read IPLDLWRLAQFAVGILILFSA, VFYYLVGIVIGICASLLVVIY, MMYGVLIGGWTIGFYVIKQLA, VLGYLVITGLISFLICYRIGP, and TSAVIFIMVLVFVAHYFPISW. The span at 388-405 shows a compositional bias: acidic residues; it reads SMDAAPEEESVEEPEEDK. Positions 388–454 are disordered; sequence SMDAAPEEES…QEVDLRQVVQ (67 aa). Residues 414–424 are compositionally biased toward polar residues; it reads NSQFRYQQAAR. The segment covering 428–446 has biased composition (acidic residues); it reads PEPESESDDSEEEEFFEQE.

It belongs to the NEMP family. In terms of assembly, interacts with OTE. In terms of tissue distribution, expressed in both germline and somatic cells in the larval testis and prepupal ovary (at protein level). Also detected in the larval eye and larval wing disk (at protein level).

The protein resides in the nucleus inner membrane. Its function is as follows. Contributes to nuclear envelope stiffness in germ cells. Required for male and female fertility. This is Nuclear envelope integral membrane protein from Drosophila melanogaster (Fruit fly).